A 311-amino-acid chain; its full sequence is 3-oxo-4,17-pregnadiene-20-carboxyl-CoA hydratase alpha subunit (311 aa).

Residues 198 to 295 (WDGVKAHELR…VAIGMPVRAT (98 aa)) form a DUF35 region.

This sequence belongs to the thioester dehydratase family. Heterodimer composed of ChsH1 and ChsH2. Two heterodimers combine to form a heterotetramer. The complex interacts with Ltp2 via the DUF35 C-terminal region of ChsH2. The ChsH1-ChsH2-Ltp2 protein complex is composed of two protomers that form a heterohexameric structure through the Ltp2 dimerization interface.

The catalysed reaction is 3-oxochola-4,17-dien-22-oyl-CoA + H2O = 17-hydroxy-3-oxochol-4-en-22-oyl-CoA. The enzyme catalyses (2E)-octenoyl-CoA + H2O = 3-hydroxyoctanoyl-CoA. It carries out the reaction (2E)-decenoyl-CoA + H2O = 3-hydroxydecanoyl-CoA. It functions in the pathway steroid metabolism; cholesterol degradation. With respect to regulation, in the absence of the Ltp2 aldolase, ChsH1/ChsH2 can hydrate only about 30% of the 3-OPDC-CoA substrate. Complete turnover requires the presence of Ltp2. Functionally, involved in cholesterol side chain degradation. Catalyzes the hydration of 3-oxo-4,17-pregnadiene-20-carboxyl-CoA (3-OPDC-CoA) to form 17-hydroxy-3-oxo-4-pregnene-20-carboxyl-CoA (17-HOPC-CoA), in the modified beta-oxidation pathway for cholesterol side chain degradation. Can also use octenoyl-CoA and decenoyl-CoA, with lower efficiency. The sequence is that of 3-oxo-4,17-pregnadiene-20-carboxyl-CoA hydratase alpha subunit from Mycobacterium tuberculosis (strain ATCC 25618 / H37Rv).